The primary structure comprises 211 residues: Mediator of RNA polymerase II transcription subunit 20 (211 aa).

The protein belongs to the Mediator complex subunit 20 family. As to quaternary structure, component of the Mediator complex.

It is found in the nucleus. Its function is as follows. Component of the Mediator complex, a coactivator involved in the regulated transcription of nearly all RNA polymerase II-dependent genes. Mediator functions as a bridge to convey information from gene-specific regulatory proteins to the basal RNA polymerase II transcription machinery. Mediator is recruited to promoters by direct interactions with regulatory proteins and serves as a scaffold for the assembly of a functional preinitiation complex with RNA polymerase II and the general transcription factors. This Xenopus laevis (African clawed frog) protein is Mediator of RNA polymerase II transcription subunit 20 (med20).